Reading from the N-terminus, the 179-residue chain is MSRLQEQYKNKISLILQKELGMSNPMQTPKIEKITINMGLGNALGDKKILQSGLEEMSLISGQKPLTCNARKSVASFKLREGNPIGCKVTLRKQKMYEFLDRLVNITIPRIRDFRGLKTTAFDGRGNYNMGITEQITFPEIDFEKVTKIRGMDIAITTTAKSDEDAKKLLAMFKFPFKG.

It belongs to the universal ribosomal protein uL5 family. As to quaternary structure, part of the 50S ribosomal subunit; part of the 5S rRNA/L5/L18/L25 subcomplex. Contacts the 5S rRNA and the P site tRNA. Forms a bridge to the 30S subunit in the 70S ribosome.

Functionally, this is one of the proteins that bind and probably mediate the attachment of the 5S RNA into the large ribosomal subunit, where it forms part of the central protuberance. In the 70S ribosome it contacts protein S13 of the 30S subunit (bridge B1b), connecting the 2 subunits; this bridge is implicated in subunit movement. Contacts the P site tRNA; the 5S rRNA and some of its associated proteins might help stabilize positioning of ribosome-bound tRNAs. This Vesicomyosocius okutanii subsp. Calyptogena okutanii (strain HA) protein is Large ribosomal subunit protein uL5.